The sequence spans 200 residues: Snake venom metalloproteinase hemorrhagic factor 2 (200 aa).

Residues 4-200 (KYIELVVVAD…RKPQCILNKP (197 aa)) form the Peptidase M12B domain. Residue Glu7 coordinates Ca(2+). An N-linked (GlcNAc...) asparagine glycan is attached at Asn70. Position 91 (Asp91) interacts with Ca(2+). Intrachain disulfides connect Cys115–Cys195, Cys155–Cys179, and Cys157–Cys162. A Zn(2+)-binding site is contributed by His140. Glu141 is an active-site residue. Zn(2+) is bound by residues His144 and His150. Positions 195 and 198 each coordinate Ca(2+).

Belongs to the venom metalloproteinase (M12B) family. P-I subfamily. As to quaternary structure, monomer. Requires Zn(2+) as cofactor. As to expression, expressed by the venom gland.

It localises to the secreted. Functionally, snake venom zinc metalloproteinase that induces weak hemorrhage and mild myonecrosis. Shows mild myotoxicity by killing myocytes. Also induces edema in the mouse footpad at doses where hemorrhage is absent. In vitro, degrades laminin, fibronectin, and type IV collagen, suggesting this toxin play a role in local tissue damage by degrading extracellular matrix, and possibly by degrading muscle extracellular matrix. Hemorrhage is not due to cytotoxicity towards endothelial cells in culture, and may only play a minor role in local bleeding characteristic of L.muta envenomations. Also induces the synthesis of several endogenous matrix metalloproteinases, which in turn, may participate in extracellular matrix degradation. The protein is Snake venom metalloproteinase hemorrhagic factor 2 of Lachesis muta muta (Bushmaster).